Here is a 214-residue protein sequence, read N- to C-terminus: Reticulon-3-B (214 aa).

Positions 1–22 (MAETSGPQSSHISSSSAGDKGS) are disordered. In terms of domain architecture, Reticulon spans 26 to 214 (VRDLLYWRDV…LPGALKKKSE (189 aa)). The next 2 helical transmembrane spans lie at 46–66 (MVLL…YLVL) and 150–170 (TYIG…LLAF).

In terms of assembly, homodimer.

The protein resides in the endoplasmic reticulum membrane. It is found in the golgi apparatus membrane. May be involved in membrane trafficking in the early secretory pathway. The sequence is that of Reticulon-3-B (rtn3-b) from Xenopus laevis (African clawed frog).